The following is a 146-amino-acid chain: Snake venom vascular endothelial growth factor toxin (146 aa).

The signal sequence occupies residues 1 to 24; that stretch reads MAAYLLAVAILFCIQGWPLGTVQG. Gln25 is subject to Pyrrolidone carboxylic acid. Cystine bridges form between Cys38–Cys80, Cys69–Cys115, and Cys73–Cys117. Residues 119–146 are disordered; sequence PRSASGVNSRKHKRNPEEGEPRAKFPFV. Residues 133 to 146 show a composition bias toward basic and acidic residues; the sequence is NPEEGEPRAKFPFV.

This sequence belongs to the PDGF/VEGF growth factor family. Snake venom VEGF subfamily. Homodimer; disulfide-linked. Interacts with VEGF receptor-1 (FLT1) with a high affinity, whereas it binds to VEGF receptor-2 (KDR) with a low affinity. Does not bind VEGF receptor-3 (FLT4). Expressed by the venom gland.

It localises to the secreted. Functionally, snake venom VEGFs may contribute to venom dispersion and prey subjugation by inducing vascular permeability and hypotension. This protein induces vascular permeability probably through VEGF (VEGFR) signaling. This protein also induces a drastic hypotensive effect after intravenous injection. The hypotension is mediated by nitric oxide (NO), which is produced by VEGF-activated endothelium NO synthase. Also induces angiogenesis in vitro. Like other crotalid VEGFs, this protein interacts with VEGF receptor-1 (FLT1) with a high affinity, whereas it binds to VEGF receptor-2 (KDR) with a low affinity. This is Snake venom vascular endothelial growth factor toxin from Bothrops insularis (Golden lancehead).